The sequence spans 323 residues: Aldo-keto reductase family 1 member C3 (323 aa).

Residues 23-24 and aspartate 50 contribute to the NADP(+) site; that span reads TY. The active-site Proton donor is tyrosine 55. Histidine 117 lines the substrate pocket. NADP(+)-binding positions include 166-167, glutamine 190, 216-222, 270-272, and 276-280; these read SN, YSALGSQ, KSY, and RIRQN.

The protein belongs to the aldo/keto reductase family. Expressed in many tissues including adrenal gland, brain, kidney, liver, lung, mammary gland, placenta, small intestine, colon, spleen, prostate and testis. High expression in prostate and mammary gland. In the prostate, higher levels in epithelial cells than in stromal cells. In the brain, expressed in medulla, spinal cord, frontotemporal lobes, thalamus, subthalamic nuclei and amygdala. Weaker expression in the hippocampus, substantia nigra and caudate.

Its subcellular location is the cytoplasm. The catalysed reaction is a 3alpha-hydroxysteroid + NADP(+) = a 3-oxosteroid + NADPH + H(+). The enzyme catalyses a 3alpha-hydroxysteroid + NAD(+) = a 3-oxosteroid + NADH + H(+). It catalyses the reaction prostaglandin F2alpha + NADP(+) = prostaglandin D2 + NADPH + H(+). It carries out the reaction prostaglandin F2alpha + NADP(+) = prostaglandin H2 + NADPH + H(+). The catalysed reaction is prostaglandin D2 + NADPH + H(+) = 11beta-prostaglandin F2 + NADP(+). The enzyme catalyses prostaglandin D2-ethanolamide + NADPH + H(+) = 11beta-prostaglandin F2-ethanolamide + NADP(+). It catalyses the reaction testosterone + NAD(+) = androst-4-ene-3,17-dione + NADH + H(+). It carries out the reaction testosterone + NADP(+) = androst-4-ene-3,17-dione + NADPH + H(+). The catalysed reaction is 17beta-estradiol + NADP(+) = estrone + NADPH + H(+). The enzyme catalyses 17beta-estradiol + NAD(+) = estrone + NADH + H(+). It catalyses the reaction (20S)-hydroxypregn-4-en-3-one + NADP(+) = progesterone + NADPH + H(+). It carries out the reaction (20S)-hydroxypregn-4-en-3-one + NAD(+) = progesterone + NADH + H(+). The catalysed reaction is 5alpha-androstane-3alpha,17beta-diol + NADP(+) = 17beta-hydroxy-5alpha-androstan-3-one + NADPH + H(+). The enzyme catalyses 5alpha-androstane-3alpha,17beta-diol + NAD(+) = 17beta-hydroxy-5alpha-androstan-3-one + NADH + H(+). It catalyses the reaction androsterone + NADPH + H(+) = 5alpha-androstane-3alpha,17beta-diol + NADP(+). It carries out the reaction 5alpha-androstane-3alpha,17beta-diol + NAD(+) = androsterone + NADH + H(+). The catalysed reaction is 5alpha-androstane-3beta,17beta-diol + NADP(+) = 17beta-hydroxy-5alpha-androstan-3-one + NADPH + H(+). The enzyme catalyses 9-cis-retinol + NADP(+) = 9-cis-retinal + NADPH + H(+). It participates in steroid metabolism. Its activity is regulated as follows. Strongly inhibited by nonsteroidal anti-inflammatory drugs (NSAID) including flufenamic acid and indomethacin. Also inhibited by the flavinoid, rutin, and by selective serotonin inhibitors (SSRIs). The oxidation reaction is inhibited by low micromolar concentrations of NADPH. In terms of biological role, cytosolic aldo-keto reductase that catalyzes the NADH and NADPH-dependent reduction of ketosteroids to hydroxysteroids. Acts as a NAD(P)(H)-dependent 3-, 17- and 20-ketosteroid reductase on the steroid nucleus and side chain and regulates the metabolism of androgens, estrogens and progesterone. Displays the ability to catalyze both oxidation and reduction in vitro, but most probably acts as a reductase in vivo since the oxidase activity measured in vitro is inhibited by physiological concentration of NADPH. Acts preferentially as a 17-ketosteroid reductase and has the highest catalytic efficiency of the AKR1C enzyme for the reduction of delta4-androstenedione to form testosterone. Reduces prostaglandin (PG) D2 to 11beta-prostaglandin F2, progesterone to 20alpha-hydroxyprogesterone and estrone to 17beta-estradiol. Catalyzes the transformation of the potent androgen dihydrotestosterone (DHT) into the less active form, 5-alpha-androstan-3-alpha,17-beta-diol (3-alpha-diol). Also displays retinaldehyde reductase activity toward 9-cis-retinal. This is Aldo-keto reductase family 1 member C3 (AKR1C3) from Homo sapiens (Human).